We begin with the raw amino-acid sequence, 144 residues long: Transcriptional regulator MraZ (144 aa).

SpoVT-AbrB domains follow at residues 5–47 and 76–121; these read EYQY…PLDR and AHKT…SQER.

Belongs to the MraZ family. Forms oligomers.

Its subcellular location is the cytoplasm. It is found in the nucleoid. This Thermus thermophilus (strain ATCC BAA-163 / DSM 7039 / HB27) protein is Transcriptional regulator MraZ.